Here is a 430-residue protein sequence, read N- to C-terminus: Elongation factor 1-alpha (430 aa).

The region spanning 7 to 219 (KPHVNIVFIG…DQIPEPEKPV (213 aa)) is the tr-type G domain. Residues 16 to 23 (GHVDHGKS) form a G1 region. 16 to 23 (GHVDHGKS) lines the GTP pocket. A Mg(2+)-binding site is contributed by serine 23. Positions 70-74 (GITID) are G2. The tract at residues 91–94 (DAPG) is G3. Residues 91–95 (DAPGH) and 146–149 (NKMD) contribute to the GTP site. The segment at 146-149 (NKMD) is G4. A G5 region spans residues 183–185 (SAW).

It belongs to the TRAFAC class translation factor GTPase superfamily. Classic translation factor GTPase family. EF-Tu/EF-1A subfamily.

Its subcellular location is the cytoplasm. The enzyme catalyses GTP + H2O = GDP + phosphate + H(+). GTP hydrolase that promotes the GTP-dependent binding of aminoacyl-tRNA to the A-site of ribosomes during protein biosynthesis. The polypeptide is Elongation factor 1-alpha (Pyrococcus woesei).